Here is a 318-residue protein sequence, read N- to C-terminus: Energy-coupling factor transporter ATP-binding protein EcfA2 (318 aa).

The ABC transporter domain occupies 22–271; it reads LRAQGLKCVF…PEIMQTTSIA (250 aa). An ATP-binding site is contributed by 59-66; sequence GNSGSGKS.

This sequence belongs to the ABC transporter superfamily. Energy-coupling factor EcfA family. As to quaternary structure, forms a stable energy-coupling factor (ECF) transporter complex composed of 2 membrane-embedded substrate-binding proteins (S component), 2 ATP-binding proteins (A component) and 2 transmembrane proteins (T component).

It is found in the cell membrane. In terms of biological role, ATP-binding (A) component of a common energy-coupling factor (ECF) ABC-transporter complex. Unlike classic ABC transporters this ECF transporter provides the energy necessary to transport a number of different substrates. The protein is Energy-coupling factor transporter ATP-binding protein EcfA2 of Mycoplasmoides gallisepticum (strain R(low / passage 15 / clone 2)) (Mycoplasma gallisepticum).